Reading from the N-terminus, the 161-residue chain is UPF0262 protein Rru_A2770 (161 aa).

It belongs to the UPF0262 family.

This is UPF0262 protein Rru_A2770 from Rhodospirillum rubrum (strain ATCC 11170 / ATH 1.1.1 / DSM 467 / LMG 4362 / NCIMB 8255 / S1).